A 94-amino-acid polypeptide reads, in one-letter code: Integration host factor subunit beta (94 aa).

It belongs to the bacterial histone-like protein family. Heterodimer of an alpha and a beta chain.

Its function is as follows. This protein is one of the two subunits of integration host factor, a specific DNA-binding protein that functions in genetic recombination as well as in transcriptional and translational control. The sequence is that of Integration host factor subunit beta from Azoarcus sp. (strain BH72).